The chain runs to 177 residues: Tubulin beta chain (177 aa).

The disordered stretch occupies residues 156–177; sequence YQDATAEEEGEFDEEEGDEEAA. The segment covering 160–177 has biased composition (acidic residues); that stretch reads TAEEEGEFDEEEGDEEAA.

It belongs to the tubulin family. As to quaternary structure, dimer of alpha and beta chains. A typical microtubule is a hollow water-filled tube with an outer diameter of 25 nm and an inner diameter of 15 nM. Alpha-beta heterodimers associate head-to-tail to form protofilaments running lengthwise along the microtubule wall with the beta-tubulin subunit facing the microtubule plus end conferring a structural polarity. Microtubules usually have 13 protofilaments but different protofilament numbers can be found in some organisms and specialized cells. Mg(2+) serves as cofactor.

It is found in the cytoplasm. Its subcellular location is the cytoskeleton. Functionally, tubulin is the major constituent of microtubules, a cylinder consisting of laterally associated linear protofilaments composed of alpha- and beta-tubulin heterodimers. Microtubules grow by the addition of GTP-tubulin dimers to the microtubule end, where a stabilizing cap forms. Below the cap, tubulin dimers are in GDP-bound state, owing to GTPase activity of alpha-tubulin. In Lytechinus pictus (Painted sea urchin), this protein is Tubulin beta chain.